The primary structure comprises 260 residues: Homeobox protein CDX-1 (260 aa).

A DNA-binding region (homeobox) is located at residues 149–208; the sequence is KDKYRVVYTDHQRLELEKEFHYSRYITIRRKAELAAALGLTERQVKIWFQNRRAKERKVN. An interaction with DNA region spans residues 152–173; the sequence is YRVVYTDHQRLELEKEFHYSRY. The segment at 191–202 is interaction with 5-mCpG DNA; that stretch reads RQVKIWFQNRRA. The disordered stretch occupies residues 204 to 260; that stretch reads ERKVNKKKLQQQSQPTSTTTPTPPAVGTPGPMGTLCSGSAPSLVSSSPLTIKEEFMP. 2 stretches are compositionally biased toward low complexity: residues 213 to 223 and 240 to 252; these read QQQSQPTSTTT and SGSA…SSPL.

The protein belongs to the Caudal homeobox family.

The protein resides in the nucleus. Plays a role in transcriptional regulation. Involved in activated KRAS-mediated transcriptional activation of PRKD1. Binds to the PRKD1 promoter. Could play a role in the terminal differentiation of the intestine. Binds preferentially to methylated DNA. In Gallus gallus (Chicken), this protein is Homeobox protein CDX-1 (CDX1).